We begin with the raw amino-acid sequence, 348 residues long: 3-isopropylmalate dehydrogenase (348 aa).

Gly76 to Glu87 contacts NAD(+). Residues Arg94, Arg104, Arg132, and Asp217 each contribute to the substrate site. Residues Asp217, Asp241, and Asp245 each contribute to the Mg(2+) site. Gly275–Asn287 contributes to the NAD(+) binding site.

This sequence belongs to the isocitrate and isopropylmalate dehydrogenases family. LeuB type 1 subfamily. Homodimer. It depends on Mg(2+) as a cofactor. Mn(2+) is required as a cofactor.

It localises to the cytoplasm. It carries out the reaction (2R,3S)-3-isopropylmalate + NAD(+) = 4-methyl-2-oxopentanoate + CO2 + NADH. It participates in amino-acid biosynthesis; L-leucine biosynthesis; L-leucine from 3-methyl-2-oxobutanoate: step 3/4. Its function is as follows. Catalyzes the oxidation of 3-carboxy-2-hydroxy-4-methylpentanoate (3-isopropylmalate) to 3-carboxy-4-methyl-2-oxopentanoate. The product decarboxylates to 4-methyl-2 oxopentanoate. The chain is 3-isopropylmalate dehydrogenase from Staphylococcus aureus (strain NCTC 8325 / PS 47).